Reading from the N-terminus, the 400-residue chain is Acetate kinase (400 aa).

Residue Asn10 participates in Mg(2+) binding. Lys17 provides a ligand contact to ATP. Position 91 (Arg91) interacts with substrate. Asp150 serves as the catalytic Proton donor/acceptor. ATP contacts are provided by residues 210–214, 285–287, and 333–337; these read HLGNG, DCR, and GIGEN. Glu387 lines the Mg(2+) pocket.

It belongs to the acetokinase family. Homodimer. Mg(2+) serves as cofactor. It depends on Mn(2+) as a cofactor.

The protein localises to the cytoplasm. It catalyses the reaction acetate + ATP = acetyl phosphate + ADP. It functions in the pathway metabolic intermediate biosynthesis; acetyl-CoA biosynthesis; acetyl-CoA from acetate: step 1/2. Functionally, catalyzes the formation of acetyl phosphate from acetate and ATP. Can also catalyze the reverse reaction. The polypeptide is Acetate kinase (Salmonella typhi).